A 137-amino-acid polypeptide reads, in one-letter code: Large-conductance mechanosensitive channel (137 aa).

Transmembrane regions (helical) follow at residues 9–29 (AFAVKGNVVDMAVGIIIGAAF), 32–52 (IVSSFVGDVVMPPIGLLIGGV), 54–74 (FGDLAVTLKAAAGDTPAVVLA), and 79–99 (IQSIIDFVIIAFAIFMGVKVI).

It belongs to the MscL family. As to quaternary structure, homopentamer.

The protein localises to the cell inner membrane. Channel that opens in response to stretch forces in the membrane lipid bilayer. May participate in the regulation of osmotic pressure changes within the cell. The chain is Large-conductance mechanosensitive channel from Pseudomonas fluorescens (strain ATCC BAA-477 / NRRL B-23932 / Pf-5).